The chain runs to 313 residues: Porphobilinogen deaminase (313 aa).

An S-(dipyrrolylmethanemethyl)cysteine modification is found at C241.

This sequence belongs to the HMBS family. As to quaternary structure, monomer. The cofactor is dipyrromethane.

The catalysed reaction is 4 porphobilinogen + H2O = hydroxymethylbilane + 4 NH4(+). The protein operates within porphyrin-containing compound metabolism; protoporphyrin-IX biosynthesis; coproporphyrinogen-III from 5-aminolevulinate: step 2/4. It participates in porphyrin-containing compound metabolism; chlorophyll biosynthesis. Tetrapolymerization of the monopyrrole PBG into the hydroxymethylbilane pre-uroporphyrinogen in several discrete steps. This Chlorobium phaeobacteroides (strain DSM 266 / SMG 266 / 2430) protein is Porphobilinogen deaminase.